We begin with the raw amino-acid sequence, 384 residues long: Substance-K receptor (384 aa).

Over 1-32 the chain is Extracellular; the sequence is MGAHASVTDTNILSGLESNATGVTAFSMPGWQ. N-linked (GlcNAc...) asparagine glycosylation occurs at Asn19. Residues 33-56 traverse the membrane as a helical segment; that stretch reads LALWATAYLALVLVAVTGNATVIW. The Cytoplasmic portion of the chain corresponds to 57 to 69; that stretch reads IILAHERMRTVTN. The helical transmembrane segment at 70–90 threads the bilayer; sequence YFIINLALADLCMAAFNATFN. At 91-107 the chain is on the extracellular side; the sequence is FIYASHNIWYFGSTFCY. Cys106 and Cys181 form a disulfide bridge. A helical transmembrane segment spans residues 108-129; that stretch reads FQNLFPVTAMFVSIYSMTAIAA. Over 130–149 the chain is Cytoplasmic; that stretch reads DRYMAIVHPFQPRLSAPSTK. The helical transmembrane segment at 150–170 threads the bilayer; that stretch reads AVIAVIWLVALALASPQCFYS. Residues 171 to 196 lie on the Extracellular side of the membrane; that stretch reads TITVDQGATKCVVAWPNDNGGKMLLL. A helical membrane pass occupies residues 197 to 218; that stretch reads YHLVVFVLIYFLPLVVMFAAYS. The Cytoplasmic segment spans residues 219-251; the sequence is VIGLTLWKRAVPRHQAHGANLRHLQAKKKFVKA. A helical membrane pass occupies residues 252–272; the sequence is MVLVVVTFAICWLPYHLYFIL. The Extracellular segment spans residues 273–290; the sequence is GTFQEDIYYRKFIQQVYL. The helical transmembrane segment at 291–310 threads the bilayer; that stretch reads ALFWLAMSSTMYNPIIYCCL. Residues 311 to 384 lie on the Cytoplasmic side of the membrane; it reads NHRFRSGFRL…GPQDGEPAGP (74 aa). A lipid anchor (S-palmitoyl cysteine) is attached at Cys324. Positions 365–384 are disordered; it reads HSEATNGQVGGPQDGEPAGP.

Belongs to the G-protein coupled receptor 1 family.

Its subcellular location is the cell membrane. This is a receptor for the tachykinin neuropeptide substance K (neurokinin A). It is associated with G proteins that activate a phosphatidylinositol-calcium second messenger system. The rank order of affinity of this receptor to tachykinins is: substance K &gt; neuromedin-K &gt; substance P. This Mus musculus (Mouse) protein is Substance-K receptor (Tacr2).